We begin with the raw amino-acid sequence, 125 residues long: 13 kDa ribonucleoprotein-associated protein (125 aa).

This sequence belongs to the eukaryotic ribosomal protein eL8 family. As to quaternary structure, component of the U3 snoRNP particle. Binds to the C'/D and B/C motifs in U3 snoRNA. Component of the 25S U4/U6.U5 tri-snRNP particle, a subcomplex of the spliceosome. Binds to the 5' stem-loop of U4 snRNA.

Its subcellular location is the nucleus. The protein resides in the nucleolus. In terms of biological role, common component of the spliceosome and rRNA processing machinery. In association with the spliceosomal U4/U6.U5 tri-snRNP particle, required for splicing of pre-mRNA. In association with box C/D snoRNPs, required for processing of pre-ribosomal RNA (rRNA) and site-specific 2'-O-methylation of substrate RNAs. Essential for the accumulation and stability of U4 snRNA, U6 snRNA, and box C/D snoRNAs. This is 13 kDa ribonucleoprotein-associated protein (snu13) from Schizosaccharomyces pombe (strain 972 / ATCC 24843) (Fission yeast).